Consider the following 939-residue polypeptide: Isoleucine--tRNA ligase (939 aa).

A 'HIGH' region motif is present at residues 58–68 (PYANGNIHIGH). Glutamate 562 is an L-isoleucyl-5'-AMP binding site. Residues 603–607 (KMSKS) carry the 'KMSKS' region motif. Residue lysine 606 participates in ATP binding. Positions 903, 906, 922, and 925 each coordinate Zn(2+).

The protein belongs to the class-I aminoacyl-tRNA synthetase family. IleS type 1 subfamily. In terms of assembly, monomer. Requires Zn(2+) as cofactor.

The protein localises to the cytoplasm. It carries out the reaction tRNA(Ile) + L-isoleucine + ATP = L-isoleucyl-tRNA(Ile) + AMP + diphosphate. Functionally, catalyzes the attachment of isoleucine to tRNA(Ile). As IleRS can inadvertently accommodate and process structurally similar amino acids such as valine, to avoid such errors it has two additional distinct tRNA(Ile)-dependent editing activities. One activity is designated as 'pretransfer' editing and involves the hydrolysis of activated Val-AMP. The other activity is designated 'posttransfer' editing and involves deacylation of mischarged Val-tRNA(Ile). The polypeptide is Isoleucine--tRNA ligase (Buchnera aphidicola subsp. Baizongia pistaciae (strain Bp)).